The primary structure comprises 95 residues: Small ribosomal subunit protein bS6 (95 aa).

It belongs to the bacterial ribosomal protein bS6 family.

Binds together with bS18 to 16S ribosomal RNA. This Bacillus velezensis (strain DSM 23117 / BGSC 10A6 / LMG 26770 / FZB42) (Bacillus amyloliquefaciens subsp. plantarum) protein is Small ribosomal subunit protein bS6.